The following is a 489-amino-acid chain: 3-octaprenyl-4-hydroxybenzoate carboxy-lyase (489 aa).

Asn-172 is a Mn(2+) binding site. Prenylated FMN is bound by residues 175 to 177 (IYR), 189 to 191 (RWL), and 194 to 195 (RG). Residue Glu-238 coordinates Mn(2+). Catalysis depends on Asp-287, which acts as the Proton donor.

It belongs to the UbiD family. Homohexamer. Requires prenylated FMN as cofactor. It depends on Mn(2+) as a cofactor.

The protein localises to the cell membrane. It catalyses the reaction a 4-hydroxy-3-(all-trans-polyprenyl)benzoate + H(+) = a 2-(all-trans-polyprenyl)phenol + CO2. It participates in cofactor biosynthesis; ubiquinone biosynthesis. In terms of biological role, catalyzes the decarboxylation of 3-octaprenyl-4-hydroxy benzoate to 2-octaprenylphenol, an intermediate step in ubiquinone biosynthesis. This chain is 3-octaprenyl-4-hydroxybenzoate carboxy-lyase, found in Glaesserella parasuis serovar 5 (strain SH0165) (Haemophilus parasuis).